A 285-amino-acid chain; its full sequence is UDP-3-O-acyl-N-acetylglucosamine deacetylase (285 aa).

3 residues coordinate Zn(2+): H89, H243, and D247. H270 serves as the catalytic Proton donor.

The protein belongs to the LpxC family. Zn(2+) is required as a cofactor.

It catalyses the reaction a UDP-3-O-[(3R)-3-hydroxyacyl]-N-acetyl-alpha-D-glucosamine + H2O = a UDP-3-O-[(3R)-3-hydroxyacyl]-alpha-D-glucosamine + acetate. The protein operates within glycolipid biosynthesis; lipid IV(A) biosynthesis; lipid IV(A) from (3R)-3-hydroxytetradecanoyl-[acyl-carrier-protein] and UDP-N-acetyl-alpha-D-glucosamine: step 2/6. Catalyzes the hydrolysis of UDP-3-O-myristoyl-N-acetylglucosamine to form UDP-3-O-myristoylglucosamine and acetate, the committed step in lipid A biosynthesis. The polypeptide is UDP-3-O-acyl-N-acetylglucosamine deacetylase (Thermosynechococcus vestitus (strain NIES-2133 / IAM M-273 / BP-1)).